Consider the following 113-residue polypeptide: U11-theraphotoxin-Hhn1a (113 aa).

Residues 1 to 21 (MNTVRVTFLLVFVLAVSLGQA) form the signal peptide. Positions 22–74 (DKDENRMEMQEKTEQGNSYLDFAENLLLQKLEELEAKLLEEDSEESRNSRQKR) are excised as a propeptide. Positions 60–69 (LEEDSEESRN) are enriched in basic and acidic residues. Positions 60 to 83 (LEEDSEESRNSRQKRCIGEGVPCD) are disordered. 3 disulfide bridges follow: cysteine 75-cysteine 90, cysteine 82-cysteine 95, and cysteine 89-cysteine 110.

The protein belongs to the neurotoxin 14 (magi-1) family. 01 (HNTX-16) subfamily. In terms of tissue distribution, expressed by the venom gland.

It localises to the secreted. Functionally, probable ion channel inhibitor. The chain is U11-theraphotoxin-Hhn1a from Cyriopagopus hainanus (Chinese bird spider).